We begin with the raw amino-acid sequence, 245 residues long: 3-deoxy-manno-octulosonate cytidylyltransferase (245 aa).

This sequence belongs to the KdsB family.

It localises to the cytoplasm. It carries out the reaction 3-deoxy-alpha-D-manno-oct-2-ulosonate + CTP = CMP-3-deoxy-beta-D-manno-octulosonate + diphosphate. It functions in the pathway nucleotide-sugar biosynthesis; CMP-3-deoxy-D-manno-octulosonate biosynthesis; CMP-3-deoxy-D-manno-octulosonate from 3-deoxy-D-manno-octulosonate and CTP: step 1/1. The protein operates within bacterial outer membrane biogenesis; lipopolysaccharide biosynthesis. In terms of biological role, activates KDO (a required 8-carbon sugar) for incorporation into bacterial lipopolysaccharide in Gram-negative bacteria. This Elusimicrobium minutum (strain Pei191) protein is 3-deoxy-manno-octulosonate cytidylyltransferase.